Consider the following 233-residue polypeptide: Ribonuclease 3 (233 aa).

Residues Leu-4–Gly-126 enclose the RNase III domain. Glu-39 contacts Mg(2+). Asp-43 is an active-site residue. Positions 112 and 115 each coordinate Mg(2+). The active site involves Glu-115. Residues Asp-153–Asp-222 form the DRBM domain.

Belongs to the ribonuclease III family. As to quaternary structure, homodimer. Requires Mg(2+) as cofactor.

It is found in the cytoplasm. It carries out the reaction Endonucleolytic cleavage to 5'-phosphomonoester.. Its function is as follows. Digests double-stranded RNA. Involved in the processing of primary rRNA transcript to yield the immediate precursors to the large and small rRNAs (23S and 16S). Processes some mRNAs, and tRNAs when they are encoded in the rRNA operon. Processes pre-crRNA and tracrRNA of type II CRISPR loci if present in the organism. This is Ribonuclease 3 from Coxiella burnetii (strain CbuK_Q154) (Coxiella burnetii (strain Q154)).